Reading from the N-terminus, the 128-residue chain is L-ectoine synthase (128 aa).

This sequence belongs to the ectoine synthase family.

The enzyme catalyses (2S)-4-acetamido-2-aminobutanoate = L-ectoine + H2O. The protein operates within amine and polyamine biosynthesis; ectoine biosynthesis; L-ectoine from L-aspartate 4-semialdehyde: step 3/3. In terms of biological role, catalyzes the circularization of gamma-N-acetyl-alpha,gamma-diaminobutyric acid (ADABA) to ectoine (1,4,5,6-tetrahydro-2-methyl-4-pyrimidine carboxylic acid), which is an excellent osmoprotectant. In Vibrio campbellii (strain ATCC BAA-1116), this protein is L-ectoine synthase.